We begin with the raw amino-acid sequence, 251 residues long: Imidazole glycerol phosphate synthase subunit HisF (251 aa).

Active-site residues include D11 and D130.

It belongs to the HisA/HisF family. Heterodimer of HisH and HisF.

Its subcellular location is the cytoplasm. The enzyme catalyses 5-[(5-phospho-1-deoxy-D-ribulos-1-ylimino)methylamino]-1-(5-phospho-beta-D-ribosyl)imidazole-4-carboxamide + L-glutamine = D-erythro-1-(imidazol-4-yl)glycerol 3-phosphate + 5-amino-1-(5-phospho-beta-D-ribosyl)imidazole-4-carboxamide + L-glutamate + H(+). Its pathway is amino-acid biosynthesis; L-histidine biosynthesis; L-histidine from 5-phospho-alpha-D-ribose 1-diphosphate: step 5/9. In terms of biological role, IGPS catalyzes the conversion of PRFAR and glutamine to IGP, AICAR and glutamate. The HisF subunit catalyzes the cyclization activity that produces IGP and AICAR from PRFAR using the ammonia provided by the HisH subunit. In Chlorobaculum parvum (strain DSM 263 / NCIMB 8327) (Chlorobium vibrioforme subsp. thiosulfatophilum), this protein is Imidazole glycerol phosphate synthase subunit HisF.